Consider the following 152-residue polypeptide: Transcriptional repressor NrdR (152 aa).

A zinc finger lies at 3–34 (CPYCQHPDSDVIDTRKLHNGETIRRRRKCEAC). Residues 49 to 139 (ITVVKKNGER…VYRSFADIGK (91 aa)) enclose the ATP-cone domain.

It belongs to the NrdR family. The cofactor is Zn(2+).

Its function is as follows. Negatively regulates transcription of bacterial ribonucleotide reductase nrd genes and operons by binding to NrdR-boxes. The sequence is that of Transcriptional repressor NrdR from Roseiflexus castenholzii (strain DSM 13941 / HLO8).